A 475-amino-acid chain; its full sequence is Ankyrin repeat, SAM and basic leucine zipper domain-containing protein 1 (475 aa).

Phosphoserine is present on residues serine 17, serine 18, and serine 20. ANK repeat units lie at residues glutamate 45–serine 74, tyrosine 78–phenylalanine 107, aspartate 110–valine 144, arginine 148–serine 177, asparagine 181–leucine 210, and aspartate 214–glycine 243. Residues serine 272–glutamate 334 enclose the SAM domain.

Interacts with DDX4, PIWIL1, RANBP9 and TDRD1.

It localises to the cytoplasm. Functionally, plays a central role during spermatogenesis by repressing transposable elements and preventing their mobilization, which is essential for the germline integrity. Acts via the piRNA metabolic process, which mediates the repression of transposable elements during meiosis by forming complexes composed of piRNAs and Piwi proteins and governs the methylation and subsequent repression of transposons. Its association with pi-bodies suggests a participation in the primary piRNAs metabolic process. Required prior to the pachytene stage to facilitate the production of multiple types of piRNAs, including those associated with repeats involved in the regulation of retrotransposons. May act by mediating protein-protein interactions during germ cell maturation. The protein is Ankyrin repeat, SAM and basic leucine zipper domain-containing protein 1 (ASZ1) of Mustela putorius furo (European domestic ferret).